The chain runs to 505 residues: MNKKVILMILDGWGKSPDPKVSAIDNANVPFINSLYKNYPSAQLRTDGLNVGLPEGQMGNSEVGHMNLGAGRIVYQDLAKINLAVAHKTLAKEQVLIDAFTYAKENNKKVHFLGLVSDGGVHSHTSHLRGLIDASQEYGLDQVYVHAFTDGRDVDPKSGAKYIHDLQDYIKDTPVKIASIVGRYYAMDRDKRWERVKLAYDLVVNGVGTPSTNPVSSVLESYEKDVTDEFIEPVVIVDENAKPLATIVEGDVVIFFNFRTDRGRELTEALSQHDFHEQNMHKLNLYYVTLTNYDETYQNVKVVYNKDNITETLGEVLEKAGKKQIRIAETEKYPHVTFFFSGGREIPFEGESRILRNSPKVATYDLQPEMSAYELADALVPELNKGEVDFVCLNFANGDMVGHTGIMEAAIKACEAVDACAKKVIDAALANDYTTIVIADHGNCETMINPDGSPNTAHTTNPVPIILVDKQLKNIQDGVLGDIAPTILELMGVQQPNAMTCHSLL.

2 residues coordinate Mn(2+): D11 and S61. The Phosphoserine intermediate role is filled by S61. Residues H122, R152–D153, R183, R189, R259–R262, and K332 contribute to the substrate site. Mn(2+) is bound by residues D399, H403, D440, H441, and H458.

Belongs to the BPG-independent phosphoglycerate mutase family. Monomer. Mn(2+) is required as a cofactor.

It carries out the reaction (2R)-2-phosphoglycerate = (2R)-3-phosphoglycerate. It participates in carbohydrate degradation; glycolysis; pyruvate from D-glyceraldehyde 3-phosphate: step 3/5. Its function is as follows. Catalyzes the interconversion of 2-phosphoglycerate and 3-phosphoglycerate. The protein is 2,3-bisphosphoglycerate-independent phosphoglycerate mutase of Flavobacterium johnsoniae (strain ATCC 17061 / DSM 2064 / JCM 8514 / BCRC 14874 / CCUG 350202 / NBRC 14942 / NCIMB 11054 / UW101) (Cytophaga johnsonae).